The following is a 569-amino-acid chain: Carboxylesterase 3 (569 aa).

An N-terminal signal peptide occupies residues 1-24; sequence MRLHRLRARLNAVAFGLLLLLVHG. A disulfide bridge connects residues Cys95 and Cys122. Asn103 carries an N-linked (GlcNAc...) asparagine glycan. Ser227 functions as the Acyl-ester intermediate in the catalytic mechanism. Cysteines 279 and 290 form a disulfide. Active-site charge relay system residues include Glu345 and His458. Positions 566–569 match the Prevents secretion from ER motif; it reads QEDL.

This sequence belongs to the type-B carboxylesterase/lipase family. N-glycosylated.

Its subcellular location is the endoplasmic reticulum lumen. It catalyses the reaction a carboxylic ester + H2O = an alcohol + a carboxylate + H(+). In terms of biological role, involved in the detoxification of xenobiotics and in the activation of ester and amide prodrugs. This Pongo abelii (Sumatran orangutan) protein is Carboxylesterase 3 (CES3).